A 381-amino-acid polypeptide reads, in one-letter code: Lipid-A-disaccharide synthase (381 aa).

It belongs to the LpxB family.

It carries out the reaction a lipid X + a UDP-2-N,3-O-bis[(3R)-3-hydroxyacyl]-alpha-D-glucosamine = a lipid A disaccharide + UDP + H(+). The protein operates within bacterial outer membrane biogenesis; LPS lipid A biosynthesis. In terms of biological role, condensation of UDP-2,3-diacylglucosamine and 2,3-diacylglucosamine-1-phosphate to form lipid A disaccharide, a precursor of lipid A, a phosphorylated glycolipid that anchors the lipopolysaccharide to the outer membrane of the cell. This is Lipid-A-disaccharide synthase from Psychromonas ingrahamii (strain DSM 17664 / CCUG 51855 / 37).